We begin with the raw amino-acid sequence, 815 residues long: Heme-copper oxidase subunit I+III (815 aa).

Residues 1–467 (MVSRLRGFLA…QLSTLGAFIF (467 aa)) form a COX1 region. The helical transmembrane segment at 26–46 (LLYLVTSIAFLLIAGSLALLF) threads the bilayer. Residue H70 participates in Fe(II)-heme a binding. The next 18 helical transmembrane spans lie at 71-91 (GLIMLLWFASPFAFGLANYIV), 105-125 (LNALSYWLYLLSGLVLLASFF), 157-177 (LAIFLFSLSVTLGTINFLVTI), 197-217 (ILFTVILMLWAFPPLMVGGAL), 242-262 (LFWFFGHPEVYILLFPALGAM), 281-301 (LTAFLIATIISFVVWMHHMFI), 314-334 (ITTILISIPFEMAVMSFIFTL), 339-359 (LVYTVPMLFAVGALLNFIIGG), 380-400 (VVAHFHYILVGTVTLGLIAGL), 419-439 (IHFALAMLGVALTFLPQFALM), 463-483 (GAFIFGGSMAIGLVNFLYSLV), 580-600 (ALFGLFVSKPLSYLGAIVFLL), 637-657 (WVFIASEVATFGSIFSAYFFI), 683-703 (LINTIILFTGTMLFTLAYLGV), 708-728 (YLITLSGLLGTLFMAIYFLTV), 736-756 (LLIAGLGLDAGMYMQAYYVTT), 758-778 (AHALHVILGVLATTYLLVKLF), and 791-811 (VLAVGIYWGIVEIVWTLVFPL). The Cu cation site is built by H248, Y252, H297, and H298. The segment at residues 248-252 (HPEVY) is a cross-link (1'-histidyl-3'-tyrosine (His-Tyr)). Residue H383 coordinates heme a3. Residue H385 coordinates Fe(II)-heme a. The segment at 545–815 (DVSNVPLSGG…TLVFPLYYLV (271 aa)) is COX3.

The protein in the N-terminal section; belongs to the heme-copper respiratory oxidase family. In the C-terminal section; belongs to the cytochrome c oxidase subunit 3 family. Requires heme as cofactor. Cu cation is required as a cofactor.

The protein resides in the cell membrane. This is Heme-copper oxidase subunit I+III (aoxB) from Aeropyrum pernix (strain ATCC 700893 / DSM 11879 / JCM 9820 / NBRC 100138 / K1).